We begin with the raw amino-acid sequence, 1449 residues long: VWFA and cache domain-containing protein CG16868 (1449 aa).

Positions 1–23 (MWPNSNLNAVLLILAVLACPTSS) are cleaved as a signal peptide. The Extracellular segment spans residues 24-1220 (QHVPLAMANS…NPQREQHAYS (1197 aa)). 6 N-linked (GlcNAc...) asparagine glycosylation sites follow: Asn-32, Asn-112, Asn-153, Asn-407, Asn-447, and Asn-497. Residues 320-541 (FVLFLIDVGS…TSLPQTSSRI (222 aa)) enclose the VWFA domain. The region spanning 557–639 (VHPPVVDADS…PRPLIQRETS (83 aa)) is the Cache 1 domain. 3 N-linked (GlcNAc...) asparagine glycosylation sites follow: Asn-649, Asn-668, and Asn-707. Residues 889–934 (TAPYLDAGGAGYIITIAHTIFEGKAHALHSAQQDRPVAVVALDVPY) form the Cache 2 domain. Asn-1015, Asn-1025, Asn-1059, and Asn-1111 each carry an N-linked (GlcNAc...) asparagine glycan. The chain crosses the membrane as a helical span at residues 1221 to 1241 (AFGPLGGAIVVLVMVIGFAIY). The Cytoplasmic segment spans residues 1242–1449 (CYRHNLDAQT…VHRHMETAES (208 aa)). Disordered stretches follow at residues 1307 to 1339 (YHVS…SSDQ) and 1352 to 1416 (DKRH…GGSV). Residues 1359 to 1369 (DTMSISTSISS) show a composition bias toward low complexity. The segment covering 1370–1392 (PTNRQQSSSQPNTHPYLSNQPTS) has biased composition (polar residues).

The protein belongs to the calcium channel subunit alpha-2/delta family.

It localises to the membrane. This chain is VWFA and cache domain-containing protein CG16868, found in Drosophila melanogaster (Fruit fly).